The primary structure comprises 273 residues: WIMGHMVNAIAQIDEFVNLGANSIETDVSFDKNANPEYTYHGIPCDCGRTCTKWEYFNTFLGGLRKATTPGDSKYHEKLVLVVFDLKTGSLYDNQAYDAGTKLAKSLLQNYWNKGNNGGRAYIVLSIPNLDHYKLITGFKETLTKEEHPELMDKVGYDFSGNDDIGDVAKAYKKAGVTGHVWQSDGITNCLLRGLDRVRKAVANRDSSNGYINKVYYWTVDKRASTRDALDAGVDGIMTNYPDVIADVLGESAYTAKFRIATYDDNPWETFKN.

His5 is an active-site residue. Positions 25 and 27 each coordinate Mg(2+). His41 (nucleophile) is an active-site residue. 2 disulfide bridges follow: Cys45–Cys51 and Cys47–Cys190. Asp85 is a Mg(2+) binding site.

Belongs to the arthropod phospholipase D family. Class II subfamily. Mg(2+) is required as a cofactor. As to expression, expressed by the venom gland.

The protein resides in the secreted. It catalyses the reaction an N-(acyl)-sphingosylphosphocholine = an N-(acyl)-sphingosyl-1,3-cyclic phosphate + choline. The enzyme catalyses an N-(acyl)-sphingosylphosphoethanolamine = an N-(acyl)-sphingosyl-1,3-cyclic phosphate + ethanolamine. It carries out the reaction a 1-acyl-sn-glycero-3-phosphocholine = a 1-acyl-sn-glycero-2,3-cyclic phosphate + choline. The catalysed reaction is a 1-acyl-sn-glycero-3-phosphoethanolamine = a 1-acyl-sn-glycero-2,3-cyclic phosphate + ethanolamine. In terms of biological role, dermonecrotic toxins cleave the phosphodiester linkage between the phosphate and headgroup of certain phospholipids (sphingolipid and lysolipid substrates), forming an alcohol (often choline) and a cyclic phosphate. This toxin acts on sphingomyelin (SM). It may also act on ceramide phosphoethanolamine (CPE), lysophosphatidylcholine (LPC) and lysophosphatidylethanolamine (LPE), but not on lysophosphatidylserine (LPS), and lysophosphatidylglycerol (LPG). It acts by transphosphatidylation, releasing exclusively cyclic phosphate products as second products. Induces dermonecrosis, hemolysis, increased vascular permeability, edema, inflammatory response, and platelet aggregation. The sequence is that of Dermonecrotic toxin LsaSicTox-alphaIB1avi from Loxosceles sabina (Tucson recluse spider).